Reading from the N-terminus, the 173-residue chain is uncharacterized protein (173 aa).

It belongs to the M.jannaschii MJ0150/MJ0739/MJ0745/MJ1460/MJ1642 family.

This is an uncharacterized protein from Methanocaldococcus jannaschii (strain ATCC 43067 / DSM 2661 / JAL-1 / JCM 10045 / NBRC 100440) (Methanococcus jannaschii).